The following is a 207-amino-acid chain: Myosin light chain 6B (207 aa).

The interval 1–50 (MPPKKDAPVKKPAGPSISKPAAKSTPGTPLAKAKAEPAAPQAPAKSQEPP) is disordered. Low complexity predominate over residues 36 to 50 (EPAAPQAPAKSQEPP). EF-hand domains lie at 63–98 (DQLE…LGQN), 140–175 (GTYE…LGEK), and 175–207 (KMTE…ILSL).

Myosin is a hexamer of 2 heavy chains and 4 light chains.

Regulatory light chain of myosin. Does not bind calcium. The sequence is that of Myosin light chain 6B from Mus musculus (Mouse).